Here is a 198-residue protein sequence, read N- to C-terminus: Holliday junction resolvase RecU (198 aa).

The tract at residues 1–22 is disordered; sequence MVNYPHKVSSQKRQTSLSQPKN. Over residues 11–22 the composition is skewed to polar residues; that stretch reads QKRQTSLSQPKN. Thr81, Asp83, Glu96, and Gln115 together coordinate Mg(2+).

Belongs to the RecU family. Mg(2+) is required as a cofactor.

The protein localises to the cytoplasm. It catalyses the reaction Endonucleolytic cleavage at a junction such as a reciprocal single-stranded crossover between two homologous DNA duplexes (Holliday junction).. Its function is as follows. Endonuclease that resolves Holliday junction intermediates in genetic recombination. Cleaves mobile four-strand junctions by introducing symmetrical nicks in paired strands. Promotes annealing of linear ssDNA with homologous dsDNA. Required for DNA repair, homologous recombination and chromosome segregation. The chain is Holliday junction resolvase RecU from Streptococcus pneumoniae (strain P1031).